The following is a 380-amino-acid chain: Probable protein phosphatase 2C 34 (380 aa).

Residues 32 to 335 form the PPM-type phosphatase domain; it reads AAGEFSMAAA…DDISVIVVYL (304 aa). Mn(2+) is bound by residues aspartate 66, glycine 67, aspartate 267, and aspartate 326.

Belongs to the PP2C family. Mg(2+) serves as cofactor. It depends on Mn(2+) as a cofactor.

It catalyses the reaction O-phospho-L-seryl-[protein] + H2O = L-seryl-[protein] + phosphate. The catalysed reaction is O-phospho-L-threonyl-[protein] + H2O = L-threonyl-[protein] + phosphate. This Oryza sativa subsp. indica (Rice) protein is Probable protein phosphatase 2C 34 (BIPP2C2).